We begin with the raw amino-acid sequence, 289 residues long: Inorganic pyrophosphatase (289 aa).

Ser-2 carries the post-translational modification N-acetylserine. The residue at position 57 (Lys-57) is an N6-acetyllysine. Residues Asp-116, Asp-121, and Asp-153 each contribute to the Mg(2+) site. A Phosphoserine modification is found at Ser-250.

Belongs to the PPase family. As to quaternary structure, homodimer. It depends on Mg(2+) as a cofactor. The N-terminus is blocked. In terms of tissue distribution, highest levels are found in retinal rod outer segments.

Its subcellular location is the cytoplasm. It catalyses the reaction diphosphate + H2O = 2 phosphate + H(+). In Bos taurus (Bovine), this protein is Inorganic pyrophosphatase (PPA1).